Here is a 454-residue protein sequence, read N- to C-terminus: Pup--protein ligase (454 aa).

E9 contributes to the Mg(2+) binding site. R53 is a binding site for ATP. A Mg(2+)-binding site is contributed by Y55. The active-site Proton acceptor is D57. E63 provides a ligand contact to Mg(2+). ATP is bound by residues T66 and W420.

The protein belongs to the Pup ligase/Pup deamidase family. Pup-conjugating enzyme subfamily.

The catalysed reaction is ATP + [prokaryotic ubiquitin-like protein]-L-glutamate + [protein]-L-lysine = ADP + phosphate + N(6)-([prokaryotic ubiquitin-like protein]-gamma-L-glutamyl)-[protein]-L-lysine.. The protein operates within protein degradation; proteasomal Pup-dependent pathway. Its pathway is protein modification; protein pupylation. In terms of biological role, catalyzes the covalent attachment of the prokaryotic ubiquitin-like protein modifier Pup to the proteasomal substrate proteins, thereby targeting them for proteasomal degradation. This tagging system is termed pupylation. The ligation reaction involves the side-chain carboxylate of the C-terminal glutamate of Pup and the side-chain amino group of a substrate lysine. The polypeptide is Pup--protein ligase (Pseudarthrobacter chlorophenolicus (strain ATCC 700700 / DSM 12829 / CIP 107037 / JCM 12360 / KCTC 9906 / NCIMB 13794 / A6) (Arthrobacter chlorophenolicus)).